Here is a 206-residue protein sequence, read N- to C-terminus: Sclerostin domain-containing protein 1 (206 aa).

Residues 1-22 form the signal peptide; the sequence is MLLSAIHFYGLLLACTFTRSYS. Positions 40 to 68 are disordered; the sequence is APASPSSNSTLNQARNGGRHYAGTGSDRN. Over residues 43 to 54 the composition is skewed to polar residues; it reads SPSSNSTLNQAR. Residue asparagine 47 is glycosylated (N-linked (GlcNAc...) asparagine). 4 disulfide bridges follow: cysteine 75–cysteine 133, cysteine 89–cysteine 147, cysteine 100–cysteine 163, and cysteine 104–cysteine 165. The 96-residue stretch at 75-170 folds into the CTCK domain; that stretch reads CRELRSTKYI…TACKCKRYTR (96 aa). Residue asparagine 173 is glycosylated (N-linked (GlcNAc...) asparagine). Residues 176 to 206 are disordered; the sequence is SHNFEGTSQAKPVQHHKERKRASKSSKHSTS. Residues 188-206 show a composition bias toward basic residues; sequence VQHHKERKRASKSSKHSTS.

The protein belongs to the sclerostin family. As to quaternary structure, interacts with LRP6.

The protein localises to the secreted. Its function is as follows. Can activate or inhibit Wnt signaling in a context-dependent manner. Activates the canonical Wnt pathway whereby acts through Disheveled proteins and beta-catenin. Antagonises Wnt signaling through the canonical pathways presumably by blocking accessibility of certain WNTs to their receptors. Induces posterior neural markers via components of the canonical Wnt pathway. This chain is Sclerostin domain-containing protein 1 (SOSTDC1), found in Gallus gallus (Chicken).